We begin with the raw amino-acid sequence, 209 residues long: Large ribosomal subunit protein uL3 (209 aa).

An N5-methylglutamine modification is found at glutamine 150.

Belongs to the universal ribosomal protein uL3 family. Part of the 50S ribosomal subunit. Forms a cluster with proteins L14 and L19. Post-translationally, methylated by PrmB.

Its function is as follows. One of the primary rRNA binding proteins, it binds directly near the 3'-end of the 23S rRNA, where it nucleates assembly of the 50S subunit. This Cronobacter sakazakii (strain ATCC BAA-894) (Enterobacter sakazakii) protein is Large ribosomal subunit protein uL3.